The following is a 250-amino-acid chain: Small ribosomal subunit protein uS2 (250 aa).

It belongs to the universal ribosomal protein uS2 family.

The chain is Small ribosomal subunit protein uS2 from Acidovorax sp. (strain JS42).